The sequence spans 118 residues: 5-hydroxyisourate hydrolase (118 aa).

Residues His-7, Arg-46, and Tyr-115 each coordinate substrate.

The protein belongs to the transthyretin family. 5-hydroxyisourate hydrolase subfamily. Homotetramer.

It catalyses the reaction 5-hydroxyisourate + H2O = 5-hydroxy-2-oxo-4-ureido-2,5-dihydro-1H-imidazole-5-carboxylate + H(+). Its function is as follows. Catalyzes the hydrolysis of 5-hydroxyisourate (HIU) to 2-oxo-4-hydroxy-4-carboxy-5-ureidoimidazoline (OHCU). This chain is 5-hydroxyisourate hydrolase, found in Brucella suis biovar 1 (strain 1330).